The sequence spans 527 residues: MSYMIAVPDMLSSAAGDLASIGSSINASTRAAAAATTRLLPAAADEVSAHIAALFSGHGEGYQAIARQMAAFHDQFTLALTSSAGAYASAEATNVEQQVLGLINAPTQALLGRPLIGNGADGTAANPNGGAGGLLYGNGGNGFSQTTAGLTGGTGGSAGLIGNGGNGGAGGAGANGGAGGNGGWLYGSGGNGGAGGAGPAGAIGAPGVAGGAGGAGGSAGLFGNGGAGGAGGAGGQGGAGIGGADGTKGGDAGAGGAGGAGGWIHGHGGVGGDGGTGGQGGDGVQGEPGDTGAAGGAGGAGGRGGDGGSAGWLSGNGGDAGTGGGGGNAGNGGNGGSAGWLSGNGGTGGGGGTAGAGGQGGNGNSGIDPGNGGQGADTGNAGNGGHGGSAAKLFGDGGAGGAGGMGSTGGTGGGGGFGGGTGGNGGNGHAGGAGGSGGTAGLLGSGGSGGTGGDGGNGGLGAGSGAKGNGGNGGDGGKGGDAQLIGNGGNGGNGGKGGTGLMPGINGTGGAGGSRGQISGNPGTPGQ.

A PE domain is found at 1–93 (MSYMIAVPDM…AGAYASAEAT (93 aa)). Composition is skewed to gly residues over residues 264-286 (IHGH…GVQG), 292-384 (GAAG…AGNG), and 472-515 (NGGD…GGSR). Disordered stretches follow at residues 264–384 (IHGH…AGNG) and 472–527 (NGGD…TPGQ).

It belongs to the mycobacterial PE family. PGRS subfamily.

This is an uncharacterized protein from Mycobacterium tuberculosis (strain CDC 1551 / Oshkosh).